We begin with the raw amino-acid sequence, 192 residues long: MLPLLLASSSAYRRELLSRLRLPFTCCSPDIDESHRPGESATALVKRLAEEKARALASSHPAHLIIGSDQVAVLGERIIGKPHTFEKARQQLLDASGASVTFLTGLALLNSQTGHCQVDCVPFTVNMRTLDSTRIERYLHAEQPYDCAGSFKAEGLGVSLFQSTAGSDATSLIGLPLIRLVDMLLAEGVETP.

Aspartate 69 (proton acceptor) is an active-site residue.

It belongs to the Maf family. YceF subfamily. The cofactor is a divalent metal cation.

Its subcellular location is the cytoplasm. The catalysed reaction is N(7)-methyl-GTP + H2O = N(7)-methyl-GMP + diphosphate + H(+). Its function is as follows. Nucleoside triphosphate pyrophosphatase that hydrolyzes 7-methyl-GTP (m(7)GTP). May have a dual role in cell division arrest and in preventing the incorporation of modified nucleotides into cellular nucleic acids. The protein is 7-methyl-GTP pyrophosphatase of Pseudomonas fluorescens (strain ATCC BAA-477 / NRRL B-23932 / Pf-5).